The sequence spans 614 residues: Zinc metalloproteinase-disintegrin-like Eoc1 (614 aa).

A signal peptide spans 1–19; that stretch reads MQVLLITISLAVLPYLGSS. Positions 20–193 are excised as a propeptide; that stretch reads IILESGIVND…KASQLNLTPE (174 aa). Position 194 is a pyrrolidone carboxylic acid (Gln-194). The Peptidase M12B domain maps to 202–398; sequence KHIKVAIVAD…KMPQCILIKP (197 aa). N-linked (GlcNAc...) asparagine glycosylation is present at Asn-268. Intrachain disulfides connect Cys-313–Cys-393, Cys-353–Cys-377, and Cys-355–Cys-360. A Zn(2+)-binding site is contributed by His-338. The active site involves Glu-339. The Zn(2+) site is built by His-342 and His-348. Asn-376 is a glycosylation site (N-linked (GlcNAc...) asparagine). A Disintegrin domain is found at 406 to 492; that stretch reads PPVCGNSLVE…ECPADQFQRN (87 aa). The Ca(2+) site is built by Val-408, Asn-411, Leu-413, Glu-415, Glu-418, and Asp-421. 14 disulfide bridges follow: Cys-409–Cys-438, Cys-420–Cys-433, Cys-422–Cys-428, Cys-432–Cys-455, Cys-446–Cys-452, Cys-451–Cys-477, Cys-464–Cys-484, Cys-471–Cys-503, Cys-496–Cys-508, Cys-515–Cys-565, Cys-530–Cys-576, Cys-543–Cys-553, Cys-560–Cys-602, and Cys-596–Cys-607. The D/ECD-tripeptide signature appears at 470 to 472; the sequence is ECD. The N-linked (GlcNAc...) asparagine glycan is linked to Asn-498.

Belongs to the venom metalloproteinase (M12B) family. P-III subfamily. P-IIIc sub-subfamily. As to quaternary structure, heterodimer; disulfide-linked. Zn(2+) is required as a cofactor. Expressed by the venom gland.

The protein localises to the secreted. Its function is as follows. This metalloproteinase hydrolyzes azocasein, and oxidized insulin B-chain. Also hydrolyzes the alpha-chain (FGA) and more slowly the beta-chain of fibrinogen (FGB), without affecting the gamma-chain. Does not cleave fibrin. Inhibits endothelial cell adhesion to extracellular matrix proteins such as fibrinogen, fibronectin, vitronectin, collagen I, and collagen IV. Induces apoptosis in vascular endothelial cells. The chain is Zinc metalloproteinase-disintegrin-like Eoc1 (Svmp3-Eoc1) from Echis ocellatus (Ocellated saw-scaled viper).